The following is a 297-amino-acid chain: Manganese efflux system protein MneP (297 aa).

The next 6 membrane-spanning stretches (helical) occupy residues 12–32 (VALI…FFGL), 43–63 (GIHS…IGIS), 85–105 (IVGI…ILSF), 111–131 (VPQY…EILY), 155–175 (GDIV…IGNS), and 177–197 (GWSY…YLIF).

This sequence belongs to the cation diffusion facilitator (CDF) transporter (TC 2.A.4) family.

It is found in the cell membrane. Functionally, primary efflux pump for manganese. May prevent manganese intoxication. The chain is Manganese efflux system protein MneP from Bacillus subtilis (strain 168).